Reading from the N-terminus, the 428-residue chain is Phosphomethylpyrimidine synthase 2 (428 aa).

Substrate-binding positions include Met-94, Tyr-123, His-162, 184–186, 225–228, and Glu-264; these read SRG and NGMR. His-268 contributes to the Zn(2+) binding site. Tyr-291 serves as a coordination point for substrate. His-332 provides a ligand contact to Zn(2+). Cys-408, Cys-411, and Cys-415 together coordinate [4Fe-4S] cluster.

The protein belongs to the ThiC family. Requires [4Fe-4S] cluster as cofactor.

The enzyme catalyses 5-amino-1-(5-phospho-beta-D-ribosyl)imidazole + S-adenosyl-L-methionine = 4-amino-2-methyl-5-(phosphooxymethyl)pyrimidine + CO + 5'-deoxyadenosine + formate + L-methionine + 3 H(+). Its pathway is cofactor biosynthesis; thiamine diphosphate biosynthesis. Functionally, catalyzes the synthesis of the hydroxymethylpyrimidine phosphate (HMP-P) moiety of thiamine from aminoimidazole ribotide (AIR) in a radical S-adenosyl-L-methionine (SAM)-dependent reaction. In Methanosarcina acetivorans (strain ATCC 35395 / DSM 2834 / JCM 12185 / C2A), this protein is Phosphomethylpyrimidine synthase 2.